The primary structure comprises 310 residues: MPVTVKMLVQKVKLDVVYATDNLLSKEITTSDISRPGLEMTGYFDYYAPERLQLFGMKEWSYLTQMTSHNRYSVLKEMFKKDTPAVVVSRNLAIPKEMVQAAKEEGISLLSSRVSTSRLAGEMSYFLDASLAERTSVHGVLMDIYGMGVLIQGDSGIGKSETGLELVKRGHRLVADDRVDVYAKDEETLWGEPAEILRHLLEIRGVGIIDVMSLYGASAVKDSSQVQLAIYLENFEAGKVFDRLGNGNEEITFSGVRIPRIRIPVKTGRNVSVVIEAAAMNHRAKEMGFDATKTFEDRLTQLITKNEVSQ.

Active-site residues include His-138 and Lys-159. ATP is bound at residue 153-160; it reads GDSGIGKS. Ser-160 contacts Mg(2+). Asp-177 functions as the Proton acceptor; for phosphorylation activity. Proton donor; for dephosphorylation activity in the catalytic mechanism. An important for the catalytic mechanism of both phosphorylation and dephosphorylation region spans residues 201-210; it reads LEIRGVGIID. Glu-202 is a binding site for Mg(2+). Arg-243 is an active-site residue. The tract at residues 264 to 269 is important for the catalytic mechanism of dephosphorylation; that stretch reads PVKTGR.

It belongs to the HPrK/P family. Homohexamer. It depends on Mg(2+) as a cofactor.

It carries out the reaction [HPr protein]-L-serine + ATP = [HPr protein]-O-phospho-L-serine + ADP + H(+). It catalyses the reaction [HPr protein]-O-phospho-L-serine + phosphate + H(+) = [HPr protein]-L-serine + diphosphate. Its function is as follows. Catalyzes the ATP- as well as the pyrophosphate-dependent phosphorylation of a specific serine residue in HPr, a phosphocarrier protein of the phosphoenolpyruvate-dependent sugar phosphotransferase system (PTS). HprK/P also catalyzes the pyrophosphate-producing, inorganic phosphate-dependent dephosphorylation (phosphorolysis) of seryl-phosphorylated HPr (P-Ser-HPr). The two antagonistic activities of HprK/P are regulated by several intracellular metabolites, which change their concentration in response to the absence or presence of rapidly metabolisable carbon sources (glucose, fructose, etc.) in the growth medium. Therefore, by controlling the phosphorylation state of HPr, HPrK/P is a sensor enzyme that plays a major role in the regulation of carbon metabolism and sugar transport: it mediates carbon catabolite repression (CCR), and regulates PTS-catalyzed carbohydrate uptake and inducer exclusion. The sequence is that of HPr kinase/phosphorylase (hprK) from Streptococcus pyogenes serotype M3 (strain ATCC BAA-595 / MGAS315).